A 145-amino-acid polypeptide reads, in one-letter code: Catabolic 3-dehydroquinase (145 aa).

The active-site Proton acceptor is the tyrosine 24. 3 residues coordinate substrate: asparagine 77, histidine 83, and aspartate 90. The active-site Proton donor is histidine 103. Substrate is bound by residues 104–105 (IT) and arginine 114.

This sequence belongs to the type-II 3-dehydroquinase family. Homododecamer. Adopts a ring-like structure, composed of an arrangement of two hexameric rings stacked on top of one another.

It catalyses the reaction 3-dehydroquinate = 3-dehydroshikimate + H2O. Its pathway is aromatic compound metabolism; 3,4-dihydroxybenzoate biosynthesis; 3,4-dihydroxybenzoate from 3-dehydroquinate: step 1/2. In terms of biological role, is involved in the catabolism of quinate. Allows the utilization of quinate as carbon source via the beta-ketoadipate pathway. The polypeptide is Catabolic 3-dehydroquinase (Clavispora lusitaniae (strain ATCC 42720) (Yeast)).